A 151-amino-acid polypeptide reads, in one-letter code: UPF0178 protein RD1_0321 (151 aa).

The protein belongs to the UPF0178 family.

This is UPF0178 protein RD1_0321 from Roseobacter denitrificans (strain ATCC 33942 / OCh 114) (Erythrobacter sp. (strain OCh 114)).